Here is a 766-residue protein sequence, read N- to C-terminus: 5-methyltetrahydropteroyltriglutamate--homocysteine methyltransferase (766 aa).

5-methyltetrahydropteroyltri-L-glutamate contacts are provided by residues 16 to 19 (RELK) and Lys119. L-homocysteine contacts are provided by residues 440 to 442 (IGS) and Glu493. L-methionine-binding positions include 440–442 (IGS) and Glu493. 5-methyltetrahydropteroyltri-L-glutamate contacts are provided by residues 524-525 (RC) and Trp570. Asp608 is an L-homocysteine binding site. L-methionine is bound at residue Asp608. Glu614 provides a ligand contact to 5-methyltetrahydropteroyltri-L-glutamate. Positions 650, 652, and 674 each coordinate Zn(2+). His703 functions as the Proton donor in the catalytic mechanism. Residue Cys735 coordinates Zn(2+).

It belongs to the vitamin-B12 independent methionine synthase family. The cofactor is Zn(2+).

It carries out the reaction 5-methyltetrahydropteroyltri-L-glutamate + L-homocysteine = tetrahydropteroyltri-L-glutamate + L-methionine. Its pathway is amino-acid biosynthesis; L-methionine biosynthesis via de novo pathway; L-methionine from L-homocysteine (MetE route): step 1/1. Functionally, catalyzes the transfer of a methyl group from 5-methyltetrahydrofolate to homocysteine resulting in methionine formation. The polypeptide is 5-methyltetrahydropteroyltriglutamate--homocysteine methyltransferase (Pseudomonas aeruginosa (strain ATCC 15692 / DSM 22644 / CIP 104116 / JCM 14847 / LMG 12228 / 1C / PRS 101 / PAO1)).